Here is a 371-residue protein sequence, read N- to C-terminus: Queuine tRNA-ribosyltransferase (371 aa).

The Proton acceptor role is filled by Asp-90. Substrate contacts are provided by residues 90 to 94 (DSGGF), Asp-144, Gln-189, and Gly-215. The RNA binding stretch occupies residues 246–252 (GVGTPEN). Catalysis depends on Asp-265, which acts as the Nucleophile. The tract at residues 270–274 (TRNAR) is RNA binding; important for wobble base 34 recognition. The Zn(2+) site is built by Cys-303, Cys-305, Cys-308, and His-334.

This sequence belongs to the queuine tRNA-ribosyltransferase family. Homodimer. Within each dimer, one monomer is responsible for RNA recognition and catalysis, while the other monomer binds to the replacement base PreQ1. The cofactor is Zn(2+).

It catalyses the reaction 7-aminomethyl-7-carbaguanine + guanosine(34) in tRNA = 7-aminomethyl-7-carbaguanosine(34) in tRNA + guanine. Its pathway is tRNA modification; tRNA-queuosine biosynthesis. Catalyzes the base-exchange of a guanine (G) residue with the queuine precursor 7-aminomethyl-7-deazaguanine (PreQ1) at position 34 (anticodon wobble position) in tRNAs with GU(N) anticodons (tRNA-Asp, -Asn, -His and -Tyr). Catalysis occurs through a double-displacement mechanism. The nucleophile active site attacks the C1' of nucleotide 34 to detach the guanine base from the RNA, forming a covalent enzyme-RNA intermediate. The proton acceptor active site deprotonates the incoming PreQ1, allowing a nucleophilic attack on the C1' of the ribose to form the product. After dissociation, two additional enzymatic reactions on the tRNA convert PreQ1 to queuine (Q), resulting in the hypermodified nucleoside queuosine (7-(((4,5-cis-dihydroxy-2-cyclopenten-1-yl)amino)methyl)-7-deazaguanosine). The sequence is that of Queuine tRNA-ribosyltransferase from Helicobacter pylori (strain HPAG1).